The following is an 88-amino-acid chain: Small ribosomal subunit protein bS20 (88 aa).

Residues Met-1–Ser-26 are disordered. The span at Ala-7–Gln-19 shows a compositional bias: basic residues.

This sequence belongs to the bacterial ribosomal protein bS20 family.

Functionally, binds directly to 16S ribosomal RNA. This is Small ribosomal subunit protein bS20 from Psychrobacter arcticus (strain DSM 17307 / VKM B-2377 / 273-4).